Consider the following 94-residue polypeptide: Small ribosomal subunit protein bS20c (94 aa).

Belongs to the bacterial ribosomal protein bS20 family.

The protein resides in the plastid. The protein localises to the chloroplast. In terms of biological role, binds directly to 16S ribosomal RNA. The chain is Small ribosomal subunit protein bS20c from Porphyra purpurea (Red seaweed).